The following is a 310-amino-acid chain: Carbamate kinase 1 (310 aa).

The protein belongs to the carbamate kinase family.

It is found in the cytoplasm. The catalysed reaction is hydrogencarbonate + NH4(+) + ATP = carbamoyl phosphate + ADP + H2O + H(+). Its pathway is metabolic intermediate metabolism; carbamoyl phosphate degradation; CO(2) and NH(3) from carbamoyl phosphate: step 1/1. The chain is Carbamate kinase 1 (arcC1) from Staphylococcus epidermidis (strain ATCC 12228 / FDA PCI 1200).